The sequence spans 282 residues: Homeobox protein CDX-4 (282 aa).

Disordered regions lie at residues M13 to G36 and M98 to A156. Residues S20 to V29 are compositionally biased toward low complexity. Composition is skewed to polar residues over residues D110–G124 and S133–S148. The homeobox DNA-binding region spans K171–I230.

It belongs to the Caudal homeobox family.

The protein localises to the nucleus. This Mus musculus (Mouse) protein is Homeobox protein CDX-4 (Cdx4).